The following is a 209-amino-acid chain: uncharacterized protein (209 aa).

The segment covering 1 to 11 has biased composition (basic and acidic residues); sequence MMRTNAGKETK. The interval 1-20 is disordered; that stretch reads MMRTNAGKETKGYNPAPADS.

This is an uncharacterized protein from Caenorhabditis elegans.